Here is a 248-residue protein sequence, read N- to C-terminus: Probable transcriptional regulatory protein MCA1220 (248 aa).

The protein belongs to the TACO1 family.

It is found in the cytoplasm. In Methylococcus capsulatus (strain ATCC 33009 / NCIMB 11132 / Bath), this protein is Probable transcriptional regulatory protein MCA1220.